The sequence spans 164 residues: Small ribosomal subunit protein uS5 (164 aa).

Residues 11 to 74 form the S5 DRBM domain; sequence LKEKLISVNR…EKARKNMIII (64 aa).

It belongs to the universal ribosomal protein uS5 family. In terms of assembly, part of the 30S ribosomal subunit. Contacts proteins S4 and S8.

With S4 and S12 plays an important role in translational accuracy. In terms of biological role, located at the back of the 30S subunit body where it stabilizes the conformation of the head with respect to the body. This is Small ribosomal subunit protein uS5 from Buchnera aphidicola subsp. Cinara cedri (strain Cc).